The primary structure comprises 424 residues: 5-methylthioadenosine/S-adenosylhomocysteine deaminase (424 aa).

His-60 and His-62 together coordinate Zn(2+). Substrate is bound by residues Glu-89 and His-181. His-208 provides a ligand contact to Zn(2+). Substrate-binding residues include Glu-211 and Asp-296. Asp-296 contributes to the Zn(2+) binding site.

The protein belongs to the metallo-dependent hydrolases superfamily. MTA/SAH deaminase family. It depends on Zn(2+) as a cofactor.

It catalyses the reaction S-adenosyl-L-homocysteine + H2O + H(+) = S-inosyl-L-homocysteine + NH4(+). The catalysed reaction is S-methyl-5'-thioadenosine + H2O + H(+) = S-methyl-5'-thioinosine + NH4(+). In terms of biological role, catalyzes the deamination of 5-methylthioadenosine and S-adenosyl-L-homocysteine into 5-methylthioinosine and S-inosyl-L-homocysteine, respectively. Is also able to deaminate adenosine. The sequence is that of 5-methylthioadenosine/S-adenosylhomocysteine deaminase from Thermococcus kodakarensis (strain ATCC BAA-918 / JCM 12380 / KOD1) (Pyrococcus kodakaraensis (strain KOD1)).